Consider the following 854-residue polypeptide: N-terminal acetyltransferase A complex subunit NAT1 (854 aa).

S2 is modified (N-acetylserine). 7 TPR repeats span residues 20-53 (ENDQ…DGSH), 54-87 (VDSL…IEGA), 91-124 (PICC…GSTN), 126-162 (QIYR…RANW), 241-274 (FGLL…NPDN), 384-417 (IWTN…TPTL), and 452-485 (RFIN…DDSV). A coiled-coil region spans residues 623–667 (LKRKSDSLDENSDEIQNNGQNSSSQKKKAKKEAAAMNKRKETEAK). Positions 626 to 668 (KSDSLDENSDEIQNNGQNSSSQKKKAKKEAAAMNKRKETEAKS) are disordered. The residue at position 674 (S674) is a Phosphoserine. Residues 728–761 (ALCFASLNKFAKRFGTTSGLFGSMAIVLLHATRN) form a TPR 8 repeat.

As to quaternary structure, component of the N-terminal acetyltransferase A (NatA) complex, which is composed of ARD1, NAT1 and NAT5. Can self-associate. NAT1 associates with the nascent polypeptide chain and the ribosome. Post-translationally, the N-terminus is blocked.

The protein localises to the cytoplasm. Functionally, non-catalytic component of the NatA N-terminal acetyltransferase, which catalyzes acetylation of proteins beginning with Met-Ser, Met-Gly and Met-Ala. N-acetylation plays a role in normal eukaryotic translation and processing, protect against proteolytic degradation and protein turnover. NAT1 anchors ARD1 and NAT5 to the ribosome and may present the N termini of nascent polypeptides for acetylation. This is N-terminal acetyltransferase A complex subunit NAT1 (NAT1) from Saccharomyces cerevisiae (strain ATCC 204508 / S288c) (Baker's yeast).